The primary structure comprises 2475 residues: MRFSWKKLVSAALVMALLVGIVYPAASGRGAVASAASGTTVELVPTDDAFTSAVAKDANANGTWMQLKGSIGGQRYIYMKFDLTALAGVEADRIENAKVWLKKMGTNGTAMTVGLRAVDDTSWSESTLTWNNAPVYGSQVLSQQSVLSTPDVYYPFDLDEYLKTQLAAGKSKLAIAFVPISTLNENMEFYARESTANTPKLVVELKDEPPAPTGLMQLVQSFGGHNKGHLRVVEFDATPASTTGNGTVGITADGAAPAAAADFPIALRFGTDGTIKAANAAGFESKTPVNYTAGQKYHVKAMINLSLGTYDLWLTPPNAGQPVLLAADYAFAASAPALNDIGGVHATADAQSTDVPAVANARLIADHFVSKAPFKDEQGQSLAIRLESDNSLANRSYAIKFDMNLTGNPLETDALISYADRSVTLNGFPDLAYIVRSNFGNFDVRNDNVYASSHPSTAQSNRTYQVEVRINPASGTGQPTRTYDVWIAPEGEQPVQLADQFKARNYANTGYALNNIGQAFVYSQADGLLSIDNHVVQDGQRLDEALARVNAASGEAAMTAALESNALGLPMERYRLMDAAKRAQVAQDVLAGRPAEGYAHALSVQAVFVSAVANRLDTENPTAPANVQVAISNTMQAHVSWTASSDDTGILYYKVFRDGALVGTVTNATSFVDNGLAPATEYTYVVKAYDLVLKEAVSQPATATSPGEQAQVRIPFSAEAIATAFGQPLLDYNLETHSGTLKWVMEWREEYEKSANALKLLTLLSASAPDYIGPDGVTTASAKALQHLRSVTAGGNEPGFAGNGLSGQGYMPLLSAIVMAKKKAPAIWNALTAAEKEKLDLMILAGLYGAKFAYDDENDNKTGIDATGNFDKEWNPNHRSGIAGAIMAMYYFEDAQWLNDQMRSFNYDDWLARLTAAGLTNVRTIYQNSGKTLTEREIRKDAAGDGFVYKGHPLSQPGKIMAEFVNYTFSHPVSPVGGFDSGIGKYRGYIVDGQDDLPNLGADSMGFEFDTLDANGKRSSLVYVFMGWKPNVDAITPVLLLDNIDSGLTSAETRDVVSRLSIGTTDMLYKNEHGYMTYAKGVNEGVKSLNGPILTINEEIWNRILNNPAAPMEAVNQASSAGQMRTALEASALGMILYGYGALSETGKNAVAQHVLDARPAAGYANKAAAQNELYEGVRLQALLALSQAQTAEQMRSALESRALGLYKPKYETASQDKKQFVAQYLLDNKPADGFLTKTEVREQVESALEPQGNQLRNLPPLASGEKRINLADYDHWPQQHGDAEVALWADDKTGAFSLTIDDNFENEHDTWRSLAQQYGFKFSWFVITSLIKDPNKWRTLAAEGHEIGSHTVTHEDKGSTLDPAHLHSEYADSQALLNTIEGVRATTLAYPFGSGREDIAAEYYIAARGTVGLPNPADSINYMNTQSLSVRPGSLELTNQAANGNSVEAMVKTLVDPNHKVWSASYYRGWSNMLVHSLNESGKTPSDGVTRTSRDLTQYLLTLLDTYRDQIWVGRYGDIVRYSQQRDTAHIVVTRKDDRKITFNLTDRMDDTLFDYPLTVKVRVDDAWSDIGATQAGEPIPFVETIRDGKRYLLVKAVPDKGSVSIVPDAASPLNVVNGAVTSEQMLSAIAAPGLGLDLGEFNALGAGKKRMVGSRLLEVRPADGYADAAALQDALDAAVEEANNAPSLSENASLSDLKVNGVTIAGFAPETYAYDIMLPEGTTALPVVSFKVADTGKATAVLQNAPALPGTAKVTVTAEDNWTVATYTLRFQVRISALQRVNTAPDASAMRTAIENAALGLVLAAYNGLTSEQKNSVAASVLTHRPATGYADVQAVQAELNAALPKINAPLLAHAIVDQLNPDTVSTANWTNLYGGTSGRKGGVYMKFNIASLAGLEADAIGDAKVQFFTTREGTVIGYAAPSSWEAPLTWNTQPLADLKNSNMAALAEIGRTAVQATGANYEMNITQYVKDAAAADKTELSLVLLGSNNTNITMQKIPTAFALSVTLATYGEPNPEPSPLAAVNEAGDAAAMQGAIAAVELDLNLTAYNGLTAAQRIDVAQALLDNRPAAGYAHALAVQVALDAAVAAAQPANQAPGGTLAASAEQLQPGQQLELTVGVSDASRFTGADILVHYDPQALTFATELYEGVRMLKAEAIASLQANYQVAAAMAEQPGTIKILLFTAGAGQPLSGTLPLFKLRASVKDDAQTGVSTAVSLSDFELTFEGEDSVWPDTTRAAVSLQIAAHPVEADKTALIAKIAHAQALLTGATVGANPGQYPQAAYDALADAIGLAEEKRDLTGVSQAAVDEAVASLGTAEQQFLNAVIPGVPADLTALNAAIAKAQRLHDNGPYGEKIGQYPQSAKVPLKSALDAAKAVGGSGASSQESVNAAAASLNGAIQTFERSLVTLVGGGATKVGIRDLSIVAKYYGVTSSDPNWGKVSAAAIDGGNEITIEVLAAVARMILADWAAGQ.

Positions 1-35 are cleaved as a signal peptide; that stretch reads MRFSWKKLVSAALVMALLVGIVYPAASGRGAVASA. The 86-residue stretch at 623–708 folds into the Fibronectin type-III domain; sequence APANVQVAIS…QPATATSPGE (86 aa). In terms of domain architecture, NodB homology spans 1295-1518; that stretch reads GAFSLTIDDN…RDQIWVGRYG (224 aa). The region spanning 2111–2223 is the Cohesin domain; the sequence is QPGQQLELTV…VSTAVSLSDF (113 aa).

In terms of processing, subject to proteolytic processing after secretion. Cleavage occurs between Gly-1205 and Leu-1206. This gives rise to a N-terminal gellan lyase of 130 kDa being the mature form of the gellan lyase. The function of C-terminal gellan lyase is not known.

It is found in the secreted. It catalyses the reaction Eliminative cleavage of beta-D-glucopyranosyl-(1-&gt;4)-beta-D-glucopyranosyluronate bonds of gellan backbone releasing tetrasaccharides containing a 4-deoxy-4,5-unsaturated D-glucopyranosyluronic acid at the non-reducing end. The tetrasaccharide produced from deacetylated gellan is beta-D-4-deoxy-Delta(4)-GlcAp-(1-&gt;4)-beta-D-Glcp-(1-&gt;4)-alpha-L-Rhap-(1-&gt;3)-beta-D-Glcp.. Functionally, cleaves the glycosidic bonds of gellan backbone and releases tetrasaccharide units of glucuronyl-glucosyl-rhamnosyl-glucose with unsaturated glucuronic acid at the non-reducing terminal. The enzyme is highly specific to the heteropolysaccharide gellan, especially deacetylated gellan. This is Gellan lyase from Bacillus sp.